Consider the following 307-residue polypeptide: Ribosomal RNA small subunit methyltransferase A (307 aa).

6 residues coordinate S-adenosyl-L-methionine: Asn-35, Val-37, Gly-62, Glu-83, Asp-113, and Asn-136.

It belongs to the class I-like SAM-binding methyltransferase superfamily. rRNA adenine N(6)-methyltransferase family. RsmA subfamily.

Its subcellular location is the cytoplasm. It carries out the reaction adenosine(1518)/adenosine(1519) in 16S rRNA + 4 S-adenosyl-L-methionine = N(6)-dimethyladenosine(1518)/N(6)-dimethyladenosine(1519) in 16S rRNA + 4 S-adenosyl-L-homocysteine + 4 H(+). Specifically dimethylates two adjacent adenosines (A1518 and A1519) in the loop of a conserved hairpin near the 3'-end of 16S rRNA in the 30S particle. May play a critical role in biogenesis of 30S subunits. In Bifidobacterium longum (strain DJO10A), this protein is Ribosomal RNA small subunit methyltransferase A.